Reading from the N-terminus, the 254-residue chain is MATSKVVFITGATSGFGEAAAQVFADAGWSLVLSGRRFERLKTLQDKLASQVPVHIIELDVRDSDSVAAAVAALPADFADITTLINNAGLALSPQPAQKVDLDDWKTMIDTNVTGLVNVTHALLPTLINHGAGASIINIGSIAGQWPYPGSHVYGASKAFVKQFSYNLRCDLLGTGVRVTDLAPGIAETEFTLVRTKGDQAASDNLYRGTTPLSARDIAEQMFYIATLPDHMNINRVEVMPVRQAWQPFAIDRD.

An NADP(+)-binding site is contributed by 8-32 (FITGATSGFGEAAAQVFADAGWSLV). Position 141 (Ser141) interacts with substrate. Tyr154 (proton acceptor) is an active-site residue.

Belongs to the short-chain dehydrogenases/reductases (SDR) family. Homodimer and heterotetramer.

The enzyme catalyses 2-hydroxyethane-1-sulfonate + NADP(+) = sulfoacetaldehyde + NADPH + H(+). The protein operates within organosulfur degradation. Catalyzes the formation of isethionate from 2-sulfoacetaldehyde in the deaminative pathway of taurine. The enzyme is specific for NADPH; NADH is not a substrate. The polypeptide is Sulfoacetaldehyde reductase (isfD) (Klebsiella oxytoca).